The following is a 427-amino-acid chain: Trigger factor (427 aa).

The 86-residue stretch at Gly163–Pro248 folds into the PPIase FKBP-type domain.

Belongs to the FKBP-type PPIase family. Tig subfamily.

The protein localises to the cytoplasm. It catalyses the reaction [protein]-peptidylproline (omega=180) = [protein]-peptidylproline (omega=0). Functionally, involved in protein export. Acts as a chaperone by maintaining the newly synthesized protein in an open conformation. Functions as a peptidyl-prolyl cis-trans isomerase. This chain is Trigger factor, found in Streptococcus gordonii (strain Challis / ATCC 35105 / BCRC 15272 / CH1 / DL1 / V288).